Here is a 146-residue protein sequence, read N- to C-terminus: MGNRLNGSYLSNTDMSIEDEQNKYNEAIEDCKICNKVYIKQSGKIDKKELNRIKKLDFFYSQKTDYEIERMFFNVPNGTFLLTDDATNENLFIAQKDLENGSLNIAKLEFKGKALYIDGKDYFSLENYLKTFEDFYKYPLIYNKNE.

Belongs to the asfivirus MGF 100 family.

In terms of biological role, plays a role in virus cell tropism, and may be required for efficient virus replication in macrophages. This Ornithodoros (relapsing fever ticks) protein is Protein MGF 100-3L.